We begin with the raw amino-acid sequence, 79 residues long: MKFNNKKNTFKKRRKVCFFTENKVTKIDFKDIELLQRFITDRGRILSRRVTNTSAKWQRQLAIAIKRARHMALIPFIQQ.

It belongs to the bacterial ribosomal protein bS18 family. In terms of assembly, part of the 30S ribosomal subunit. Forms a tight heterodimer with protein bS6.

In terms of biological role, binds as a heterodimer with protein bS6 to the central domain of the 16S rRNA, where it helps stabilize the platform of the 30S subunit. The polypeptide is Small ribosomal subunit protein bS18 (Onion yellows phytoplasma (strain OY-M)).